Consider the following 94-residue polypeptide: uncharacterized protein (94 aa).

This is an uncharacterized protein from Narcissus mosaic virus (NMV).